A 237-amino-acid chain; its full sequence is Concanavalin V (237 aa).

Positions 8 and 10 each coordinate Mn(2+). Residues Asp-10, Tyr-12, Asn-14, and Asp-19 each contribute to the Ca(2+) site. Asn-14 is a binding site for a carbohydrate. Positions 19 and 24 each coordinate Mn(2+). A carbohydrate contacts are provided by residues Gly-70, 98–100, Asp-208, and Arg-228; that span reads GLY.

Belongs to the leguminous lectin family. As to quaternary structure, homotetramer. Post-translationally, concanavalin A-like lectins of the Diocleinae subtribe undergo proteolytic processing referred to as circular permutation. The propeptide is split into an N-terminal and a C-terminal part, the gamma and beta chain, respectively. These are then religated in beta-gamma order to form the mature alpha chain. The beta and gamma chains can often be detected in cell extracts. Residues 1-118 of the mature chain, as displayed here, probably constitute the beta chain in the propeptide, residues 119-237 the gamma chain.

Its function is as follows. D-mannose/D-glucose-binding lectin which binds alpha-methyl-D-mannoside, D-mannose and D-glucose in that order. Also binds to serum fetuin and ovalbumin. Has hemagglutinating activity towards rabbit erythrocytes. Is not toxic towards larvae of the brine shrimp Artemia. Induces relaxation in rat endothelized aorta. Shows a transient edematogenic effect in rat. This chain is Concanavalin V, found in Canavalia cathartica (Jackbean).